A 307-amino-acid polypeptide reads, in one-letter code: Ribonuclease Z (307 aa).

Residues His63, His65, Asp67, His68, His141, Asp208, and His266 each coordinate Zn(2+). Asp67 acts as the Proton acceptor in catalysis.

This sequence belongs to the RNase Z family. Homodimer. Zn(2+) serves as cofactor.

It catalyses the reaction Endonucleolytic cleavage of RNA, removing extra 3' nucleotides from tRNA precursor, generating 3' termini of tRNAs. A 3'-hydroxy group is left at the tRNA terminus and a 5'-phosphoryl group is left at the trailer molecule.. Zinc phosphodiesterase, which displays some tRNA 3'-processing endonuclease activity. Probably involved in tRNA maturation, by removing a 3'-trailer from precursor tRNA. This chain is Ribonuclease Z, found in Chlamydia pneumoniae (Chlamydophila pneumoniae).